Here is a 660-residue protein sequence, read N- to C-terminus: ATP-dependent zinc metalloprotease FtsH (660 aa).

Positions 1–20 are disordered; that stretch reads MMPSSQRPSPRGSRQSPSPD. Topologically, residues 1–24 are cytoplasmic; it reads MMPSSQRPSPRGSRQSPSPDQRGR. The helical transmembrane segment at 25-45 threads the bilayer; that stretch reads IAFAILATLVVAVLLLTLFSH. Residues 46-118 are Extracellular-facing; sequence APSGQPLGYS…VQVSYITPGP (73 aa). The helical transmembrane segment at 119-139 threads the bilayer; that stretch reads GIASTIIEYVIFFGIFIGIWV. At 140 to 660 the chain is on the cytoplasmic side; that stretch reads YLTRRTQGSV…ASHDDTDPVS (521 aa). 213–220 serves as a coordination point for ATP; that stretch reads GPPGTGKT. Position 435 (His435) interacts with Zn(2+). Residue Glu436 is part of the active site. His439 and Asp511 together coordinate Zn(2+).

The protein in the central section; belongs to the AAA ATPase family. This sequence in the C-terminal section; belongs to the peptidase M41 family. In terms of assembly, homohexamer. The cofactor is Zn(2+).

It localises to the cell membrane. Functionally, acts as a processive, ATP-dependent zinc metallopeptidase for both cytoplasmic and membrane proteins. Plays a role in the quality control of integral membrane proteins. This is ATP-dependent zinc metalloprotease FtsH from Acidimicrobium ferrooxidans (strain DSM 10331 / JCM 15462 / NBRC 103882 / ICP).